A 99-amino-acid chain; its full sequence is Putative GIY-YIG domain-containing protein 242L (99 aa).

In terms of domain architecture, GIY-YIG spans 5 to 81 (NGWNIYMVTM…KKQTKKVKLQ (77 aa)).

In Invertebrate iridescent virus 6 (IIV-6), this protein is Putative GIY-YIG domain-containing protein 242L.